We begin with the raw amino-acid sequence, 207 residues long: LexA repressor (207 aa).

A DNA-binding region (H-T-H motif) is located at residues 28–48 (RAEIARELGFRSANAAEEHLK). Active-site for autocatalytic cleavage activity residues include Ser124 and Lys161.

Belongs to the peptidase S24 family. Homodimer.

It catalyses the reaction Hydrolysis of Ala-|-Gly bond in repressor LexA.. Functionally, represses a number of genes involved in the response to DNA damage (SOS response), including recA and lexA. In the presence of single-stranded DNA, RecA interacts with LexA causing an autocatalytic cleavage which disrupts the DNA-binding part of LexA, leading to derepression of the SOS regulon and eventually DNA repair. The chain is LexA repressor from Aliivibrio salmonicida (strain LFI1238) (Vibrio salmonicida (strain LFI1238)).